The chain runs to 535 residues: Protein translocase subunit SecD (535 aa).

6 helical membrane passes run 5 to 25 (LTWK…GIIG), 377 to 397 (AIIG…GAGI), 402 to 421 (SLLL…GAVL), 425 to 444 (GIAG…VLIF), 469 to 489 (WLTI…LFLF), and 496 to 516 (GFAV…VFVS).

Belongs to the SecD/SecF family. SecD subfamily. In terms of assembly, forms a complex with SecF. Part of the essential Sec protein translocation apparatus which comprises SecA, SecYEG and auxiliary proteins SecDF. Other proteins may also be involved.

It localises to the cell inner membrane. In terms of biological role, part of the Sec protein translocase complex. Interacts with the SecYEG preprotein conducting channel. SecDF uses the proton motive force (PMF) to complete protein translocation after the ATP-dependent function of SecA. This is Protein translocase subunit SecD from Koribacter versatilis (strain Ellin345).